We begin with the raw amino-acid sequence, 341 residues long: Ketol-acid reductoisomerase (NADP(+)) (341 aa).

Residues Ala-2–Thr-181 enclose the KARI N-terminal Rossmann domain. Residues Tyr-25 to Gln-28, Arg-48, Ser-52, and Asp-82 to Gln-85 contribute to the NADP(+) site. Residue His-107 is part of the active site. Residue Gly-133 participates in NADP(+) binding. One can recognise a KARI C-terminal knotted domain in the interval Thr-182–Val-327. Residues Asp-190, Glu-194, Glu-226, and Glu-230 each coordinate Mg(2+). Ser-251 is a substrate binding site.

This sequence belongs to the ketol-acid reductoisomerase family. Mg(2+) is required as a cofactor.

The catalysed reaction is (2R)-2,3-dihydroxy-3-methylbutanoate + NADP(+) = (2S)-2-acetolactate + NADPH + H(+). It carries out the reaction (2R,3R)-2,3-dihydroxy-3-methylpentanoate + NADP(+) = (S)-2-ethyl-2-hydroxy-3-oxobutanoate + NADPH + H(+). It functions in the pathway amino-acid biosynthesis; L-isoleucine biosynthesis; L-isoleucine from 2-oxobutanoate: step 2/4. It participates in amino-acid biosynthesis; L-valine biosynthesis; L-valine from pyruvate: step 2/4. Functionally, involved in the biosynthesis of branched-chain amino acids (BCAA). Catalyzes an alkyl-migration followed by a ketol-acid reduction of (S)-2-acetolactate (S2AL) to yield (R)-2,3-dihydroxy-isovalerate. In the isomerase reaction, S2AL is rearranged via a Mg-dependent methyl migration to produce 3-hydroxy-3-methyl-2-ketobutyrate (HMKB). In the reductase reaction, this 2-ketoacid undergoes a metal-dependent reduction by NADPH to yield (R)-2,3-dihydroxy-isovalerate. This is Ketol-acid reductoisomerase (NADP(+)) from Geobacillus kaustophilus (strain HTA426).